A 311-amino-acid chain; its full sequence is 4-hydroxy-tetrahydrodipicolinate synthase (311 aa).

T51 contributes to the pyruvate binding site. Residue Y140 is the Proton donor/acceptor of the active site. K168 serves as the catalytic Schiff-base intermediate with substrate. A pyruvate-binding site is contributed by I209.

This sequence belongs to the DapA family. Homotetramer; dimer of dimers.

It is found in the cytoplasm. The catalysed reaction is L-aspartate 4-semialdehyde + pyruvate = (2S,4S)-4-hydroxy-2,3,4,5-tetrahydrodipicolinate + H2O + H(+). Its pathway is amino-acid biosynthesis; L-lysine biosynthesis via DAP pathway; (S)-tetrahydrodipicolinate from L-aspartate: step 3/4. In terms of biological role, catalyzes the condensation of (S)-aspartate-beta-semialdehyde [(S)-ASA] and pyruvate to 4-hydroxy-tetrahydrodipicolinate (HTPA). The sequence is that of 4-hydroxy-tetrahydrodipicolinate synthase from Streptococcus pneumoniae (strain ATCC 700669 / Spain 23F-1).